We begin with the raw amino-acid sequence, 277 residues long: Transport and Golgi organization protein 11 (277 aa).

Over Met-1–Lys-256 the chain is Cytoplasmic. Disordered stretches follow at residues His-124–Asp-148 and Val-167–Gln-200. Ser-127, Ser-129, Ser-132, and Ser-133 each carry phosphoserine. Residues Gly-174–Gln-200 are compositionally biased toward polar residues. Thr-177 is modified (phosphothreonine). Ser-179, Ser-182, and Ser-190 each carry phosphoserine. A phosphothreonine mark is found at Thr-216 and Thr-222. Positions Glu-225–Gln-253 form a coiled coil. Residues Ile-257–Leu-274 form a helical; Anchor for type IV membrane protein membrane-spanning segment. Topologically, residues Asn-275–Asn-277 are lumenal.

The protein belongs to the Tango11 family.

It is found in the endoplasmic reticulum membrane. Its subcellular location is the mitochondrion outer membrane. It localises to the peroxisome. In terms of biological role, may play a role in mitochondrial and peroxisomal fission. The sequence is that of Transport and Golgi organization protein 11 (Tango11) from Drosophila melanogaster (Fruit fly).